A 461-amino-acid chain; its full sequence is tRNA (guanine(10)-N(2))-methyltransferase TRMT11 (461 aa).

The protein belongs to the class I-like SAM-binding methyltransferase superfamily. TRM11 methyltransferase family. Part of the heterodimeric TRMT11-TRM112 methyltransferase complex; this complex forms an active tRNA methyltransferase, where TRMT112 acts as an activator of the catalytic subunit TRMT11.

Its subcellular location is the cytoplasm. It carries out the reaction guanosine(10) in tRNA + S-adenosyl-L-methionine = N(2)-methylguanosine(10) in tRNA + S-adenosyl-L-homocysteine + H(+). Functionally, catalytic subunit of the TRMT11-TRM112 methyltransferase complex, that specifically mediates the S-adenosyl-L-methionine-dependent N(2)-methylation of guanosine nucleotide at position 10 (m2G10) in tRNAs. This is one of the major tRNA (guanine-N(2))-methyltransferases. In Gallus gallus (Chicken), this protein is tRNA (guanine(10)-N(2))-methyltransferase TRMT11.